Here is a 387-residue protein sequence, read N- to C-terminus: Dual-specificity RNA methyltransferase RlmN (387 aa).

E110 acts as the Proton acceptor in catalysis. One can recognise a Radical SAM core domain in the interval 117-349 (VGKAGALCVS…NRAGYASPIR (233 aa)). A disulfide bridge links C124 with C360. Residues C131, C135, and C138 each contribute to the [4Fe-4S] cluster site. Residues 186-187 (GE), S218, 240-242 (SLH), and N317 contribute to the S-adenosyl-L-methionine site. Catalysis depends on C360, which acts as the S-methylcysteine intermediate.

The protein belongs to the radical SAM superfamily. RlmN family. The cofactor is [4Fe-4S] cluster.

The protein localises to the cytoplasm. The catalysed reaction is adenosine(2503) in 23S rRNA + 2 reduced [2Fe-2S]-[ferredoxin] + 2 S-adenosyl-L-methionine = 2-methyladenosine(2503) in 23S rRNA + 5'-deoxyadenosine + L-methionine + 2 oxidized [2Fe-2S]-[ferredoxin] + S-adenosyl-L-homocysteine. It catalyses the reaction adenosine(37) in tRNA + 2 reduced [2Fe-2S]-[ferredoxin] + 2 S-adenosyl-L-methionine = 2-methyladenosine(37) in tRNA + 5'-deoxyadenosine + L-methionine + 2 oxidized [2Fe-2S]-[ferredoxin] + S-adenosyl-L-homocysteine. Its function is as follows. Specifically methylates position 2 of adenine 2503 in 23S rRNA and position 2 of adenine 37 in tRNAs. m2A2503 modification seems to play a crucial role in the proofreading step occurring at the peptidyl transferase center and thus would serve to optimize ribosomal fidelity. This Hyphomonas neptunium (strain ATCC 15444) protein is Dual-specificity RNA methyltransferase RlmN.